A 222-amino-acid polypeptide reads, in one-letter code: Cytidylate kinase (222 aa).

Residue 11-19 participates in ATP binding; sequence GPSGSGKST.

The protein belongs to the cytidylate kinase family. Type 1 subfamily.

Its subcellular location is the cytoplasm. It carries out the reaction CMP + ATP = CDP + ADP. It catalyses the reaction dCMP + ATP = dCDP + ADP. In Ureaplasma urealyticum serovar 10 (strain ATCC 33699 / Western), this protein is Cytidylate kinase.